Reading from the N-terminus, the 229-residue chain is Transcriptional regulatory protein CreB (229 aa).

Positions 5-119 (TVWLVEDEQG…EVCARVRTLL (115 aa)) constitute a Response regulatory domain. At D54 the chain carries 4-aspartylphosphate. Residues 129–228 (SPVIRIGHFE…HRGMGYSLRG (100 aa)) constitute a DNA-binding region (ompR/PhoB-type).

Post-translationally, phosphorylated by CreC.

It is found in the cytoplasm. In terms of biological role, member of the two-component regulatory system CreC/CreB involved in catabolic regulation. In Escherichia coli (strain K12), this protein is Transcriptional regulatory protein CreB (creB).